Consider the following 381-residue polypeptide: Metallophosphoesterase 1 (381 aa).

The helical transmembrane segment at 15–35 (LIFAFVSVFVFCEYVIYYLVI) threads the bilayer. Positions 59, 101, 139, 234, 288, and 290 each coordinate a divalent metal cation. The helical transmembrane segment at 341 to 361 (TVLVVYCSSCLIIALITLIHL) threads the bilayer. Residues 377 to 381 (KHKTL) carry the Di-lysine motif motif.

The protein belongs to the metallophosphoesterase superfamily. MPPE1 family. It depends on Mn(2+) as a cofactor.

It is found in the endoplasmic reticulum-Golgi intermediate compartment membrane. Metallophosphoesterase that catalyzes the removal of a side-chain ethanolamine-phosphate (EtNP) from the second mannose of the GPI-anchor protein intermediate. Participates in the glycan remodeling steps of GPI-anchor maturation to allow an efficient transport of GPI-anchor proteins from the endoplasmic reticulum to the Golgi. The protein is Metallophosphoesterase 1 of Danio rerio (Zebrafish).